The chain runs to 200 residues: Ciliary neurotrophic factor (200 aa).

It belongs to the CNTF family. As to quaternary structure, homodimer. Nervous system.

It is found in the cytoplasm. Functionally, CNTF is a survival factor for various neuronal cell types. Seems to prevent the degeneration of motor axons after axotomy. The protein is Ciliary neurotrophic factor (CNTF) of Homo sapiens (Human).